A 214-amino-acid chain; its full sequence is Thymidylate kinase (214 aa).

Position 10–17 (10–17) interacts with ATP; it reads GGEGAGKS.

Belongs to the thymidylate kinase family.

The enzyme catalyses dTMP + ATP = dTDP + ADP. Its function is as follows. Phosphorylation of dTMP to form dTDP in both de novo and salvage pathways of dTTP synthesis. This Brucella suis (strain ATCC 23445 / NCTC 10510) protein is Thymidylate kinase.